The sequence spans 437 residues: Cobyrinate a,c-diamide synthase (437 aa).

One can recognise a GATase cobBQ-type domain in the interval 243-433; that stretch reads IAAIAYDSAF…SHFHFSSARG (191 aa). Residue Cys324 is the Nucleophile of the active site.

This sequence belongs to the CobB/CbiA family. It depends on Mg(2+) as a cofactor.

The catalysed reaction is cob(II)yrinate + 2 L-glutamine + 2 ATP + 2 H2O = cob(II)yrinate a,c diamide + 2 L-glutamate + 2 ADP + 2 phosphate + 2 H(+). The protein operates within cofactor biosynthesis; adenosylcobalamin biosynthesis; cob(II)yrinate a,c-diamide from sirohydrochlorin (anaerobic route): step 10/10. In terms of biological role, catalyzes the ATP-dependent amidation of the two carboxylate groups at positions a and c of cobyrinate, using either L-glutamine or ammonia as the nitrogen source. This Sulfurisphaera tokodaii (strain DSM 16993 / JCM 10545 / NBRC 100140 / 7) (Sulfolobus tokodaii) protein is Cobyrinate a,c-diamide synthase.